The chain runs to 416 residues: Glutamyl-tRNA reductase (416 aa).

Substrate contacts are provided by residues 50–53, Ser109, 114–116, and Gln120; these read TCNR and EPQ. The active-site Nucleophile is Cys51. Residue 189–194 coordinates NADP(+); the sequence is GAGEMI.

It belongs to the glutamyl-tRNA reductase family. Homodimer.

The catalysed reaction is (S)-4-amino-5-oxopentanoate + tRNA(Glu) + NADP(+) = L-glutamyl-tRNA(Glu) + NADPH + H(+). The protein operates within porphyrin-containing compound metabolism; protoporphyrin-IX biosynthesis; 5-aminolevulinate from L-glutamyl-tRNA(Glu): step 1/2. Its function is as follows. Catalyzes the NADPH-dependent reduction of glutamyl-tRNA(Glu) to glutamate 1-semialdehyde (GSA). This Vesicomyosocius okutanii subsp. Calyptogena okutanii (strain HA) protein is Glutamyl-tRNA reductase.